Here is a 188-residue protein sequence, read N- to C-terminus: ATP synthase subunit delta (188 aa).

The protein belongs to the ATPase delta chain family. In terms of assembly, F-type ATPases have 2 components, F(1) - the catalytic core - and F(0) - the membrane proton channel. F(1) has five subunits: alpha(3), beta(3), gamma(1), delta(1), epsilon(1). F(0) has three main subunits: a(1), b(2) and c(10-14). The alpha and beta chains form an alternating ring which encloses part of the gamma chain. F(1) is attached to F(0) by a central stalk formed by the gamma and epsilon chains, while a peripheral stalk is formed by the delta and b chains.

The protein localises to the cell membrane. In terms of biological role, f(1)F(0) ATP synthase produces ATP from ADP in the presence of a proton or sodium gradient. F-type ATPases consist of two structural domains, F(1) containing the extramembraneous catalytic core and F(0) containing the membrane proton channel, linked together by a central stalk and a peripheral stalk. During catalysis, ATP synthesis in the catalytic domain of F(1) is coupled via a rotary mechanism of the central stalk subunits to proton translocation. This protein is part of the stalk that links CF(0) to CF(1). It either transmits conformational changes from CF(0) to CF(1) or is implicated in proton conduction. This chain is ATP synthase subunit delta, found in Lawsonia intracellularis (strain PHE/MN1-00).